The chain runs to 321 residues: MIPTTVLSNNVEMPLIGLGTTHSGGYYHDAVLHSIKKCGYRLIDTAKRYGVEKQLGIAVKNCSVPREEMFLSTKLWPVDCGDEVYNAFQTSCEKLQTDYLDMYMIHMPQLPDWIVNQKETKEKTWRQMELLYEDEHVRSIGVSNYSIEDLDELLEFASILPHANQVELHPWFHQADLKNYCDELGILTMGYCPLAKGKYLEDETLCKIASKYQKSPAQICLRWSIQQNVPTVPKSTDCRRLKENTNVFDFELSAEDMNTLNSFSSQNRKIVDLSNICQKMSLPDGYKLNGRVFGVPEEDETIPKSCSKCAQKQNVPLPVCI.

The active-site Proton donor is Y49. Residue H106 participates in substrate binding.

It belongs to the aldo/keto reductase family.

This is an uncharacterized protein from Caenorhabditis elegans.